The sequence spans 123 residues: Large ribosomal subunit protein bL12 (123 aa).

Belongs to the bacterial ribosomal protein bL12 family. Homodimer. Part of the ribosomal stalk of the 50S ribosomal subunit. Forms a multimeric L10(L12)X complex, where L10 forms an elongated spine to which 2 to 4 L12 dimers bind in a sequential fashion. Binds GTP-bound translation factors.

Its function is as follows. Forms part of the ribosomal stalk which helps the ribosome interact with GTP-bound translation factors. Is thus essential for accurate translation. This Borrelia turicatae (strain 91E135) protein is Large ribosomal subunit protein bL12.